Reading from the N-terminus, the 87-residue chain is Large ribosomal subunit protein bL27 (87 aa).

The segment at 1–21 (MAHKKAGGSSRNGRDSESKRL) is disordered.

The protein belongs to the bacterial ribosomal protein bL27 family.

The chain is Large ribosomal subunit protein bL27 from Paraburkholderia phytofirmans (strain DSM 17436 / LMG 22146 / PsJN) (Burkholderia phytofirmans).